The following is a 355-amino-acid chain: D-alanine--D-alanine ligase (355 aa).

Positions 143 to 350 constitute an ATP-grasp domain; that stretch reads KIIFSNLKIP…IEQLVAKLVD (208 aa). 178-233 is an ATP binding site; it reads LKKLNFPVFVKPSNSGSSLGISKVINKSEIIPALEKARGIDPSILIEEGLEVREIE. Mg(2+) is bound by residues Asp303, Glu317, and Asn319.

The protein belongs to the D-alanine--D-alanine ligase family. Mg(2+) serves as cofactor. It depends on Mn(2+) as a cofactor.

It localises to the cytoplasm. It carries out the reaction 2 D-alanine + ATP = D-alanyl-D-alanine + ADP + phosphate + H(+). It participates in cell wall biogenesis; peptidoglycan biosynthesis. Its function is as follows. Cell wall formation. The polypeptide is D-alanine--D-alanine ligase (Prochlorococcus marinus (strain AS9601)).